An 89-amino-acid polypeptide reads, in one-letter code: Large ribosomal subunit protein bL27 (89 aa).

Belongs to the bacterial ribosomal protein bL27 family.

The protein is Large ribosomal subunit protein bL27 of Bacteroides thetaiotaomicron (strain ATCC 29148 / DSM 2079 / JCM 5827 / CCUG 10774 / NCTC 10582 / VPI-5482 / E50).